We begin with the raw amino-acid sequence, 283 residues long: 4-hydroxy-3-methylbut-2-enyl diphosphate reductase (283 aa).

Cys12 is a binding site for [4Fe-4S] cluster. Residues His41 and His74 each coordinate (2E)-4-hydroxy-3-methylbut-2-enyl diphosphate. Residues His41 and His74 each contribute to the dimethylallyl diphosphate site. Residues His41 and His74 each contribute to the isopentenyl diphosphate site. A [4Fe-4S] cluster-binding site is contributed by Cys96. (2E)-4-hydroxy-3-methylbut-2-enyl diphosphate is bound at residue His124. His124 lines the dimethylallyl diphosphate pocket. An isopentenyl diphosphate-binding site is contributed by His124. The active-site Proton donor is the Glu126. Thr161 is a (2E)-4-hydroxy-3-methylbut-2-enyl diphosphate binding site. Cys189 contacts [4Fe-4S] cluster. Positions 217, 219, and 261 each coordinate (2E)-4-hydroxy-3-methylbut-2-enyl diphosphate. 3 residues coordinate dimethylallyl diphosphate: Ser217, Asn219, and Ser261. Isopentenyl diphosphate is bound by residues Ser217, Asn219, and Ser261.

Belongs to the IspH family. [4Fe-4S] cluster is required as a cofactor.

It catalyses the reaction isopentenyl diphosphate + 2 oxidized [2Fe-2S]-[ferredoxin] + H2O = (2E)-4-hydroxy-3-methylbut-2-enyl diphosphate + 2 reduced [2Fe-2S]-[ferredoxin] + 2 H(+). The enzyme catalyses dimethylallyl diphosphate + 2 oxidized [2Fe-2S]-[ferredoxin] + H2O = (2E)-4-hydroxy-3-methylbut-2-enyl diphosphate + 2 reduced [2Fe-2S]-[ferredoxin] + 2 H(+). It functions in the pathway isoprenoid biosynthesis; dimethylallyl diphosphate biosynthesis; dimethylallyl diphosphate from (2E)-4-hydroxy-3-methylbutenyl diphosphate: step 1/1. Its pathway is isoprenoid biosynthesis; isopentenyl diphosphate biosynthesis via DXP pathway; isopentenyl diphosphate from 1-deoxy-D-xylulose 5-phosphate: step 6/6. Catalyzes the conversion of 1-hydroxy-2-methyl-2-(E)-butenyl 4-diphosphate (HMBPP) into a mixture of isopentenyl diphosphate (IPP) and dimethylallyl diphosphate (DMAPP). Acts in the terminal step of the DOXP/MEP pathway for isoprenoid precursor biosynthesis. This is 4-hydroxy-3-methylbut-2-enyl diphosphate reductase from Anaeromyxobacter sp. (strain Fw109-5).